Consider the following 280-residue polypeptide: uncharacterized protein (280 aa).

An N-terminal signal peptide occupies residues 1 to 35 (MQGQVLKKVLKKYVHIGMCTLFLHAILLFPCVAQA).

This is an uncharacterized protein from Treponema pallidum (strain Nichols).